We begin with the raw amino-acid sequence, 239 residues long: Ubiquinone biosynthesis O-methyltransferase (239 aa).

The S-adenosyl-L-methionine site is built by Arg-44, Gly-63, Asp-84, and Met-128.

Belongs to the methyltransferase superfamily. UbiG/COQ3 family.

The enzyme catalyses a 3-demethylubiquinol + S-adenosyl-L-methionine = a ubiquinol + S-adenosyl-L-homocysteine + H(+). It carries out the reaction a 3-(all-trans-polyprenyl)benzene-1,2-diol + S-adenosyl-L-methionine = a 2-methoxy-6-(all-trans-polyprenyl)phenol + S-adenosyl-L-homocysteine + H(+). The protein operates within cofactor biosynthesis; ubiquinone biosynthesis. Functionally, O-methyltransferase that catalyzes the 2 O-methylation steps in the ubiquinone biosynthetic pathway. The protein is Ubiquinone biosynthesis O-methyltransferase of Xanthomonas axonopodis pv. citri (strain 306).